The chain runs to 233 residues: Sugar fermentation stimulation protein homolog (233 aa).

This sequence belongs to the SfsA family.

The protein is Sugar fermentation stimulation protein homolog of Acetivibrio thermocellus (strain ATCC 27405 / DSM 1237 / JCM 9322 / NBRC 103400 / NCIMB 10682 / NRRL B-4536 / VPI 7372) (Clostridium thermocellum).